A 313-amino-acid polypeptide reads, in one-letter code: MENRSLVTIAEHSKEKILYLLEMAKEFEKKPNRKILDGKVVATLFFEPSTRTRLSFETAANRLGARVIGFTDPKVTSSSKGETLKDTIMMVSNYADIIVMRHFLEGAARYASEVAPVPIVNAGDGANQHPSQTMLDLYSIYKTQGTLENLNIYLVGDLKYGRTVHSLLMAMRHFNPTFHFIAPEELKMPEEYKIYCKEHHIKYKEYTDFNEETIADADILYMTRVQRERFTDLMEYERVKDVYILRNKMLEHTRPNLRILHPLPRVNEIAYDVDENPKAYYFQQAQNGLYARQAILCDVLGITLNDVIEDAKK.

Residues arginine 51 and threonine 52 each contribute to the carbamoyl phosphate site. Lysine 80 is an L-aspartate binding site. Carbamoyl phosphate is bound by residues arginine 101, histidine 129, and glutamine 132. L-aspartate contacts are provided by arginine 162 and arginine 224. Leucine 263 and proline 264 together coordinate carbamoyl phosphate.

It belongs to the aspartate/ornithine carbamoyltransferase superfamily. ATCase family. Heterododecamer (2C3:3R2) of six catalytic PyrB chains organized as two trimers (C3), and six regulatory PyrI chains organized as three dimers (R2).

The enzyme catalyses carbamoyl phosphate + L-aspartate = N-carbamoyl-L-aspartate + phosphate + H(+). Its pathway is pyrimidine metabolism; UMP biosynthesis via de novo pathway; (S)-dihydroorotate from bicarbonate: step 2/3. Its function is as follows. Catalyzes the condensation of carbamoyl phosphate and aspartate to form carbamoyl aspartate and inorganic phosphate, the committed step in the de novo pyrimidine nucleotide biosynthesis pathway. This chain is Aspartate carbamoyltransferase catalytic subunit, found in Phocaeicola vulgatus (strain ATCC 8482 / DSM 1447 / JCM 5826 / CCUG 4940 / NBRC 14291 / NCTC 11154) (Bacteroides vulgatus).